A 231-amino-acid polypeptide reads, in one-letter code: Aminodeoxyfutalosine nucleosidase (231 aa).

The active-site Proton acceptor is Glu14. Substrate contacts are provided by residues Gly81, Val155, and 175 to 176 (ME). The Proton donor role is filled by Asp199.

The protein belongs to the PNP/UDP phosphorylase family. As to quaternary structure, homodimer.

It catalyses the reaction 6-amino-6-deoxyfutalosine + H2O = dehypoxanthine futalosine + adenine. The catalysed reaction is S-adenosyl-L-homocysteine + H2O = S-(5-deoxy-D-ribos-5-yl)-L-homocysteine + adenine. It carries out the reaction S-methyl-5'-thioadenosine + H2O = 5-(methylsulfanyl)-D-ribose + adenine. The enzyme catalyses 5'-deoxyadenosine + H2O = 5-deoxy-D-ribose + adenine. It functions in the pathway quinol/quinone metabolism; menaquinone biosynthesis. The protein operates within amino-acid biosynthesis; L-methionine biosynthesis via salvage pathway; S-methyl-5-thio-alpha-D-ribose 1-phosphate from S-methyl-5'-thioadenosine (hydrolase route): step 1/2. In terms of biological role, catalyzes the direct conversion of aminodeoxyfutalosine (AFL) into dehypoxanthine futalosine (DHFL) and adenine via the hydrolysis of the N-glycosidic bond; this reaction seems to represent an essential step in the menaquinone biosynthesis pathway in Helicobacter species. Can also probably catalyzes the hydrolysis of 5'-methylthioadenosine (MTA) and S-adenosylhomocysteine (SAH) to adenine and the corresponding thioribose, 5'-methylthioribose and S-ribosylhomocysteine, respectively. These other activities highlight the tremendous versatility of the enzyme, which also plays key roles in S-adenosylmethionine recycling and in the biosynthesis of the quorum-sensing molecule autoinducer-2. Does not act on futalosine (FL) as substrate. This chain is Aminodeoxyfutalosine nucleosidase (mtnN), found in Helicobacter pylori (strain ATCC 700392 / 26695) (Campylobacter pylori).